Here is an 840-residue protein sequence, read N- to C-terminus: Ubiquitin carboxyl-terminal hydrolase 20 (840 aa).

Residues 6–117 form a UBP-type; degenerate zinc finger; the sequence is DFCPHLDSIG…NSCYMNAALQ (112 aa). Zn(2+)-binding residues include Cys30, Cys33, Cys53, and His60. The USP domain maps to 101–611; it reads TGMKNIGNSC…EAYVLFYRKS (511 aa). Cys110 serves as the catalytic Nucleophile. Disordered regions lie at residues 205-254 and 315-342; these read EPIL…GGVG and HCSS…SSPL. The span at 220–230 shows a compositional bias: basic and acidic residues; the sequence is DDQREGERGGT. Residues 242 to 254 show a composition bias toward gly residues; that stretch reads GEMGDGEGGGGVG. The span at 333 to 342 shows a compositional bias: low complexity; sequence SSTPPRSSPL. His569 functions as the Proton acceptor in the catalytic mechanism. DUSP domains follow at residues 613–706 and 715–818; these read EEAE…LYVC and ALAK…RQTV.

This sequence belongs to the peptidase C19 family. USP20/USP33 subfamily.

The protein resides in the cytoplasm. It localises to the perinuclear region. The protein localises to the cytoskeleton. It is found in the microtubule organizing center. Its subcellular location is the centrosome. It catalyses the reaction Thiol-dependent hydrolysis of ester, thioester, amide, peptide and isopeptide bonds formed by the C-terminal Gly of ubiquitin (a 76-residue protein attached to proteins as an intracellular targeting signal).. Its function is as follows. Deubiquitinating enzyme involved in beta-2 adrenergic receptor (adrb2) recycling. Acts as a regulator of G-protein coupled receptor (GPCR) signaling by mediating the deubiquitination beta-2 adrenergic receptor (adrb2). Plays a central role in adrb2 recycling and resensitization after prolonged agonist stimulation by constitutively binding adrb2, mediating deubiquitination of adrb2 and inhibiting lysosomal trafficking of adrb2. Mediates deubiquitination of both 'Lys-48'- and 'Lys-63'-linked polyubiquitin chains. The protein is Ubiquitin carboxyl-terminal hydrolase 20 (usp20) of Xenopus laevis (African clawed frog).